An 886-amino-acid polypeptide reads, in one-letter code: KH domain-containing protein hrpk-2 (886 aa).

Over residues 359–368 (DNHFYNDKDS) the composition is skewed to basic and acidic residues. The segment at 359 to 433 (DNHFYNDKDS…SHRKESACVD (75 aa)) is disordered. Basic residues-rich tracts occupy residues 369–388 (GKHHRHRHRSKNNKKHKKHY) and 415–425 (HERKKRQRSSH). 2 consecutive KH domains span residues 698–761 (KETV…IEKI) and 775–839 (PGIF…AYLT).

In Caenorhabditis elegans, this protein is KH domain-containing protein hrpk-2.